Here is a 1171-residue protein sequence, read N- to C-terminus: Zinc finger BED domain-containing protein 4 (1171 aa).

Residues 25 to 62 (EEEDDDGIPPDSLERMDFKSEQEDMKQTDSGGERAGLG) are disordered. The span at 36–51 (SLERMDFKSEQEDMKQ) shows a compositional bias: basic and acidic residues. Lys43 is covalently cross-linked (Glycyl lysine isopeptide (Lys-Gly) (interchain with G-Cter in SUMO2)). 2 BED-type zinc fingers span residues 115-172 (RKKS…LIQE) and 285-342 (RRRS…VLQE). Zn(2+) is bound by residues Cys136, Cys139, His160, His165, Cys306, Cys309, His330, and His335. Over residues 362–385 (LLPPEGELSSVSSSPVKPVRESPS) the composition is skewed to low complexity. The tract at residues 362-405 (LLPPEGELSSVSSSPVKPVRESPSASSSPDRLTEDLQSHLNPGD) is disordered. BED-type zinc fingers lie at residues 456 to 512 (RLKS…VGSQ) and 558 to 615 (KKTS…LKTE). Zn(2+) is bound by residues Cys477 and Cys480. Lys489 participates in a covalent cross-link: Glycyl lysine isopeptide (Lys-Gly) (interchain with G-Cter in SUMO2). Zn(2+)-binding residues include His500, His505, Cys579, Cys582, His603, and His608. Residues 614-640 (TEVSETARPSSPDTRVPRGTELSGASS) are disordered. The residue at position 624 (Ser624) is a Phosphoserine. Positions 1086-1171 (LAYLEEEVLE…VNLPLIYFQY (86 aa)) are required for homodimerization and nuclear accumulation.

In terms of assembly, homodimer; via C-terminus. Interacts with MYH9. Interacts with SAFB/SAFB1. In terms of tissue distribution, expressed in testis, heart, lung, and weakly expressed in brain, liver, muscle, placenta and small intestine. Expressed in the retina, found in the cone photoreceptors, Mueller cells, cone pedicles and in the innermost retinal layer.

It is found in the nucleus. Its subcellular location is the cytoplasm. The protein localises to the photoreceptor inner segment. Its function is as follows. Transcriptional regulator that binds to poly-guanine tracts in gene promoters and activates transcription. Able to bind single- and double-stranded DNA and RNA. This Homo sapiens (Human) protein is Zinc finger BED domain-containing protein 4 (ZBED4).